We begin with the raw amino-acid sequence, 72 residues long: Sec-independent protein translocase protein TatA (72 aa).

Residues 1 to 21 traverse the membrane as a helical segment; the sequence is MLGGISIWQLLIVLAILVLIF.

It belongs to the TatA/E family. As to quaternary structure, the Tat system comprises two distinct complexes: a TatABC complex, containing multiple copies of TatA, TatB and TatC subunits, and a separate TatA complex, containing only TatA subunits. Substrates initially bind to the TatABC complex, which probably triggers association of the separate TatA complex to form the active translocon.

It localises to the cell inner membrane. Functionally, part of the twin-arginine translocation (Tat) system that transports large folded proteins containing a characteristic twin-arginine motif in their signal peptide across membranes. TatA could form the protein-conducting channel of the Tat system. The chain is Sec-independent protein translocase protein TatA from Marinomonas sp. (strain MWYL1).